The following is a 116-amino-acid chain: uncharacterized protein (116 aa).

The VOC domain occupies 5 to 113 (EVKMVVLSTE…TGNGLVFYSP (109 aa)). Lysine 76 participates in a covalent cross-link: Isoglutamyl lysine isopeptide (Lys-Gln) (interchain with Q-Cter in protein Pup).

This is an uncharacterized protein from Mycolicibacterium smegmatis (strain ATCC 700084 / mc(2)155) (Mycobacterium smegmatis).